The sequence spans 337 residues: F420-dependent glucose-6-phosphate dehydrogenase (337 aa).

D40 is a coenzyme F420-(gamma-Glu)n binding site. H41 functions as the Proton donor in the catalytic mechanism. Residues T77 and 108 to 109 contribute to the coenzyme F420-(gamma-Glu)n site; that span reads SG. Residue E110 is the Proton acceptor of the active site. Residues N113, 178–179, and 181–182 each bind coenzyme F420-(gamma-Glu)n; these read GG and VV. Substrate-binding residues include T196, K199, K260, and R284.

Belongs to the F420-dependent glucose-6-phosphate dehydrogenase family. In terms of assembly, homodimer.

It catalyses the reaction oxidized coenzyme F420-(gamma-L-Glu)(n) + D-glucose 6-phosphate + H(+) = 6-phospho-D-glucono-1,5-lactone + reduced coenzyme F420-(gamma-L-Glu)(n). In terms of biological role, catalyzes the coenzyme F420-dependent oxidation of glucose 6-phosphate (G6P) to 6-phosphogluconolactone. This Rhodococcus erythropolis (strain PR4 / NBRC 100887) protein is F420-dependent glucose-6-phosphate dehydrogenase.